A 788-amino-acid chain; its full sequence is Endonuclease MutS2 (788 aa).

ATP is bound at residue 332–339 (GPNTGGKT). Positions 713–788 (VDLRGMDAEE…GTGVTVVELK (76 aa)) constitute a Smr domain.

It belongs to the DNA mismatch repair MutS family. MutS2 subfamily. In terms of assembly, homodimer. Binds to stalled ribosomes, contacting rRNA.

Functionally, endonuclease that is involved in the suppression of homologous recombination and thus may have a key role in the control of bacterial genetic diversity. In terms of biological role, acts as a ribosome collision sensor, splitting the ribosome into its 2 subunits. Detects stalled/collided 70S ribosomes which it binds and splits by an ATP-hydrolysis driven conformational change. Acts upstream of the ribosome quality control system (RQC), a ribosome-associated complex that mediates the extraction of incompletely synthesized nascent chains from stalled ribosomes and their subsequent degradation. Probably generates substrates for RQC. The polypeptide is Endonuclease MutS2 (Clostridium botulinum (strain Kyoto / Type A2)).